The following is a 445-amino-acid chain: Na(+)-translocating NADH-quinone reductase subunit A (445 aa).

It belongs to the NqrA family. In terms of assembly, composed of six subunits; NqrA, NqrB, NqrC, NqrD, NqrE and NqrF.

It carries out the reaction a ubiquinone + n Na(+)(in) + NADH + H(+) = a ubiquinol + n Na(+)(out) + NAD(+). Its function is as follows. NQR complex catalyzes the reduction of ubiquinone-1 to ubiquinol by two successive reactions, coupled with the transport of Na(+) ions from the cytoplasm to the periplasm. NqrA to NqrE are probably involved in the second step, the conversion of ubisemiquinone to ubiquinol. In Marinomonas sp. (strain MWYL1), this protein is Na(+)-translocating NADH-quinone reductase subunit A.